Here is a 406-residue protein sequence, read N- to C-terminus: Acetylornithine/succinyldiaminopimelate aminotransferase (406 aa).

Pyridoxal 5'-phosphate contacts are provided by residues 108 to 109 (GT) and phenylalanine 141. Arginine 144 contacts N(2)-acetyl-L-ornithine. 226–229 (DEVQ) provides a ligand contact to pyridoxal 5'-phosphate. Lysine 255 bears the N6-(pyridoxal phosphate)lysine mark. Position 283 (serine 283) interacts with N(2)-acetyl-L-ornithine. Threonine 284 is a pyridoxal 5'-phosphate binding site.

It belongs to the class-III pyridoxal-phosphate-dependent aminotransferase family. ArgD subfamily. In terms of assembly, homodimer. Pyridoxal 5'-phosphate serves as cofactor.

The protein resides in the cytoplasm. The catalysed reaction is N(2)-acetyl-L-ornithine + 2-oxoglutarate = N-acetyl-L-glutamate 5-semialdehyde + L-glutamate. It carries out the reaction N-succinyl-(2S,6S)-2,6-diaminopimelate + 2-oxoglutarate = (S)-2-succinylamino-6-oxoheptanedioate + L-glutamate. It functions in the pathway amino-acid biosynthesis; L-arginine biosynthesis; N(2)-acetyl-L-ornithine from L-glutamate: step 4/4. Its pathway is amino-acid biosynthesis; L-lysine biosynthesis via DAP pathway; LL-2,6-diaminopimelate from (S)-tetrahydrodipicolinate (succinylase route): step 2/3. Involved in both the arginine and lysine biosynthetic pathways. The sequence is that of Acetylornithine/succinyldiaminopimelate aminotransferase from Escherichia coli O157:H7.